Reading from the N-terminus, the 341-residue chain is L-threonine 3-dehydrogenase (341 aa).

Position 38 (Cys38) interacts with Zn(2+). Catalysis depends on charge relay system residues Thr40 and His43. Zn(2+)-binding residues include His63, Glu64, Cys93, Cys96, Cys99, and Cys107. NAD(+) is bound by residues Ile175, Asp195, Arg200, 262–264 (LGI), and 286–287 (IY).

The protein belongs to the zinc-containing alcohol dehydrogenase family. As to quaternary structure, homotetramer. Zn(2+) serves as cofactor.

It localises to the cytoplasm. The catalysed reaction is L-threonine + NAD(+) = (2S)-2-amino-3-oxobutanoate + NADH + H(+). It participates in amino-acid degradation; L-threonine degradation via oxydo-reductase pathway; glycine from L-threonine: step 1/2. In terms of biological role, catalyzes the NAD(+)-dependent oxidation of L-threonine to 2-amino-3-ketobutyrate. In Shewanella pealeana (strain ATCC 700345 / ANG-SQ1), this protein is L-threonine 3-dehydrogenase.